The chain runs to 433 residues: Serine--tRNA ligase (433 aa).

Thr236–Glu238 is an L-serine binding site. Arg267 to Glu269 is an ATP binding site. An L-serine-binding site is contributed by Glu290. Residue Glu354–Ser357 participates in ATP binding. Ser394 is a binding site for L-serine.

Belongs to the class-II aminoacyl-tRNA synthetase family. Type-1 seryl-tRNA synthetase subfamily. In terms of assembly, homodimer. The tRNA molecule binds across the dimer.

The protein localises to the cytoplasm. It carries out the reaction tRNA(Ser) + L-serine + ATP = L-seryl-tRNA(Ser) + AMP + diphosphate + H(+). The enzyme catalyses tRNA(Sec) + L-serine + ATP = L-seryl-tRNA(Sec) + AMP + diphosphate + H(+). It participates in aminoacyl-tRNA biosynthesis; selenocysteinyl-tRNA(Sec) biosynthesis; L-seryl-tRNA(Sec) from L-serine and tRNA(Sec): step 1/1. Catalyzes the attachment of serine to tRNA(Ser). Is also able to aminoacylate tRNA(Sec) with serine, to form the misacylated tRNA L-seryl-tRNA(Sec), which will be further converted into selenocysteinyl-tRNA(Sec). This is Serine--tRNA ligase from Acidiphilium cryptum (strain JF-5).